The chain runs to 73 residues: Conotoxin CnIIIE (73 aa).

Positions 1-19 (MSKLGVLLTICLLLFPLTA) are cleaved as a signal peptide. Positions 20–49 (LPMDGDQSVDRPAERMQDDISSEQYPLFNQ) are excised as a propeptide. 3 cysteine pairs are disulfide-bonded: Cys53-Cys72, Cys54-Cys70, and Cys60-Cys73.

This sequence belongs to the conotoxin M superfamily. In terms of tissue distribution, expressed by the venom duct.

The protein resides in the secreted. In terms of biological role, shows a paralytic effect in fish. The polypeptide is Conotoxin CnIIIE (Conus consors (Singed cone)).